A 385-amino-acid polypeptide reads, in one-letter code: Acetate kinase (385 aa).

N9 provides a ligand contact to Mg(2+). An ATP-binding site is contributed by K16. Substrate is bound at residue R87. The active-site Proton donor/acceptor is D144. ATP is bound by residues H202–G206 and D277–R279. E373 is a Mg(2+) binding site.

Belongs to the acetokinase family. As to quaternary structure, homodimer. The cofactor is Mg(2+). It depends on Mn(2+) as a cofactor.

The protein resides in the cytoplasm. The catalysed reaction is acetate + ATP = acetyl phosphate + ADP. The protein operates within metabolic intermediate biosynthesis; acetyl-CoA biosynthesis; acetyl-CoA from acetate: step 1/2. Catalyzes the formation of acetyl phosphate from acetate and ATP. Can also catalyze the reverse reaction. The polypeptide is Acetate kinase (Rickettsia akari (strain Hartford)).